Consider the following 425-residue polypeptide: uncharacterized protein (425 aa).

Residues 55–181 (RYSHSLGVYE…DLDADRMDYL (127 aa)) enclose the HD domain.

This is an uncharacterized protein from Mycoplasma pneumoniae (strain ATCC 29342 / M129 / Subtype 1) (Mycoplasmoides pneumoniae).